Consider the following 499-residue polypeptide: Cytochrome P450 710A2 (499 aa).

The helical transmembrane segment at 5 to 25 (VSIFASLAPYLVSALLLFFLI) threads the bilayer. Cys439 serves as a coordination point for heme.

This sequence belongs to the cytochrome P450 family. The cofactor is heme. Expressed in the vascular tissues of roots, shoots, stems and leaves. Expressed in root tips, carpes, siliques and seeds.

The protein localises to the membrane. It carries out the reaction 5-dehydroepisterol + NADPH + O2 + H(+) = ergosta-5,7,22,24(28)-tetraen-3beta-ol + NADP(+) + 2 H2O. The protein operates within steroid biosynthesis; sterol biosynthesis. Functionally, required to form the C-22 double bond in the sterol side chain. Possesses in vitro C-22 desaturase activity toward 24-epi-campesterol and beta-sitosterol and produces brassicasterol and stigmasterol, respectively. No activity with campesterol. This is Cytochrome P450 710A2 from Arabidopsis thaliana (Mouse-ear cress).